Here is a 316-residue protein sequence, read N- to C-terminus: MDPNLQYWQNNGQSFLSRLGLWSKILDPTLLLSQAEIEEARTLIQNEENTPGKNDKVSNAWLLSLSSVHSDTGAVISPAYRPQVFLPISAPLVVGSLIAHKGIKSAMFWQFVLHTYCAGFNHANRNATATKDNKTTMKQSLLILGAVSYSTVTGALPQIILQRLRLISSLTQTICRSFLPVPLAAGLAAFNILVVRSEEAENGISLFDANGNAVGVSKEAGFKAVKETAISRATLFGTTAALPTFLMALLERAKFVQRNPRLIAPIGSMCTVITFGLMIPVSFSLFPQLGKIKKENLEKEFQSLDGNEELFYHRGL.

5 helical membrane passes run 83 to 103 (QVFLPISAPLVVGSLIAHKGI), 141 to 161 (LLILGAVSYSTVTGALPQIIL), 174 to 194 (ICRSFLPVPLAAGLAAFNILV), 230 to 250 (ISRATLFGTTAALPTFLMALL), and 263 to 283 (IAPIGSMCTVITFGLMIPVSF).

The protein belongs to the sideroflexin family.

Its subcellular location is the mitochondrion inner membrane. In terms of biological role, mitochondrial amino-acid transporter. Does not act as a serine transporter: not able to mediate transport of serine into mitochondria. The protein is Sideroflexin-4 of Danio rerio (Zebrafish).